A 99-amino-acid chain; its full sequence is Large ribosomal subunit protein bL21 (99 aa).

This sequence belongs to the bacterial ribosomal protein bL21 family. In terms of assembly, part of the 50S ribosomal subunit. Contacts protein L20.

Its function is as follows. This protein binds to 23S rRNA in the presence of protein L20. In Neorickettsia sennetsu (strain ATCC VR-367 / Miyayama) (Ehrlichia sennetsu), this protein is Large ribosomal subunit protein bL21.